The primary structure comprises 659 residues: Siderophore transporter fer7 (659 aa).

The tract at residues 1-62 (MSNQAQDQPE…ADASSAREGQ (62 aa)) is disordered. Positions 31–41 (QSVSAHGNTSL) are enriched in polar residues. The N-linked (GlcNAc...) asparagine glycan is linked to asparagine 38. Positions 42 to 54 (NKKDRVSAVRDAD) are enriched in basic and acidic residues. The next 8 helical transmembrane spans lie at 79 to 99 (NSPI…CFAL), 121 to 141 (LFGV…PFIA), 150 to 170 (QTAY…VASA), 208 to 228 (GVVT…GNLI), 245 to 265 (GMFA…LMYV), 316 to 336 (LVGL…FSIY), 348 to 368 (IIAM…WEIL), and 379 to 399 (VWYN…FMGG). The N-linked (GlcNAc...) asparagine glycan is linked to asparagine 415. 2 helical membrane-spanning segments follow: residues 424 to 444 (VVNA…GFYL) and 451 to 471 (KFLQ…YLYG). N-linked (GlcNAc...) asparagine glycosylation occurs at asparagine 475. A run of 3 helical transmembrane segments spans residues 478 to 498 (TMVV…SVVG), 528 to 548 (AIGS…YLAA), and 590 to 610 (PIFI…LLMP).

Belongs to the major facilitator superfamily.

The protein resides in the membrane. Functionally, siderophore transporter; part of the gene cluster that mediates the biosynthesis of siderophore ferrichrome A which is contributing to organismal virulence. The polypeptide is Siderophore transporter fer7 (Mycosarcoma maydis (Corn smut fungus)).